Here is a 528-residue protein sequence, read N- to C-terminus: uncharacterized protein (528 aa).

Basic residues-rich tracts occupy residues methionine 1 to leucine 16 and glutamine 25 to lysine 43. Residues methionine 1–aspartate 59 are disordered.

This sequence belongs to the NOC2 family.

Its subcellular location is the nucleus. It is found in the nucleolus. This is an uncharacterized protein from Schizosaccharomyces pombe (strain 972 / ATCC 24843) (Fission yeast).